The following is a 120-amino-acid chain: Protein BEX4 (120 aa).

Positions 1 to 54 (MESKEELAANNLNGENAQQENEGGEQAPTQNEEESRHLGGGEGQKPGGNIRRGR) are disordered. The segment covering 8 to 27 (AANNLNGENAQQENEGGEQA) has biased composition (low complexity). The interaction with SIRT2 stretch occupies residues 31–90 (NEEESRHLGGGEGQKPGGNIRRGRVRRLVPNFRWAIPNRHIEHNEARDDVERFVGQMMEI). Residues 31-120 (NEEESRHLGG…DNHYDFCLIP (90 aa)) form an interaction with alpha-tubulin region. Cys117 serves as a coordination point for Zn(2+).

It belongs to the BEX family. Interacts with alpha-tubulin. Interacts with SIRT2. Ubiquitinated and degraded by the proteasome. Very high expression in heart, skeletal muscle, liver, and kidney. The levels of expression are uniform throughout the brain.

The protein resides in the cytoplasm. The protein localises to the cytoskeleton. Its subcellular location is the spindle pole. It localises to the nucleus. May play a role in microtubule deacetylation by negatively regulating the SIRT2 deacetylase activity toward alpha-tubulin and thereby participate in the control of cell cycle progression and genomic stability. In absence of reductive stress, acts as a pseudosubstrate for the CRL2(FEM1B) complex: associates with FEM1B via zinc, thereby preventing association between FEM1B and its substrates. The sequence is that of Protein BEX4 from Homo sapiens (Human).